Consider the following 450-residue polypeptide: Hyaluronidase-1 (450 aa).

A signal peptide spans 1–35; sequence MRPFSLEVSLHLPWAMAAHLLPVCTLFLNLLSMTQ. Intrachain disulfides connect C58-C348 and C222-C236. The N-linked (GlcNAc...) asparagine glycan is linked to N85. E146 acts as the Proton donor in catalysis. N-linked (GlcNAc...) asparagine glycosylation is found at N231 and N365. 3 cysteine pairs are disulfide-bonded: C373–C384, C378–C433, and C435–C444. A glycan (N-linked (GlcNAc...) asparagine) is linked at N398. Positions 433–444 constitute an EGF-like domain; sequence CRCYRGWRGTRC.

This sequence belongs to the glycosyl hydrolase 56 family.

It localises to the secreted. The protein localises to the lysosome. It carries out the reaction Random hydrolysis of (1-&gt;4)-linkages between N-acetyl-beta-D-glucosamine and D-glucuronate residues in hyaluronate.. Functionally, may have a role in promoting tumor progression. May block the TGFB1-enhanced cell growth. The sequence is that of Hyaluronidase-1 (HYAL1) from Bos taurus (Bovine).